The chain runs to 251 residues: Ubiquinone biosynthesis O-methyltransferase (251 aa).

S-adenosyl-L-methionine is bound by residues R36, G61, D82, and I124.

The protein belongs to the methyltransferase superfamily. UbiG/COQ3 family.

It carries out the reaction a 3-demethylubiquinol + S-adenosyl-L-methionine = a ubiquinol + S-adenosyl-L-homocysteine + H(+). It catalyses the reaction a 3-(all-trans-polyprenyl)benzene-1,2-diol + S-adenosyl-L-methionine = a 2-methoxy-6-(all-trans-polyprenyl)phenol + S-adenosyl-L-homocysteine + H(+). The protein operates within cofactor biosynthesis; ubiquinone biosynthesis. Its function is as follows. O-methyltransferase that catalyzes the 2 O-methylation steps in the ubiquinone biosynthetic pathway. The chain is Ubiquinone biosynthesis O-methyltransferase from Rickettsia akari (strain Hartford).